Reading from the N-terminus, the 421-residue chain is UPF0229 protein lpp2857 (421 aa).

A disordered region spans residues 83–110; sequence IAGDRIKRPSGGGAGGAGGNASDSGEGE. A compositionally biased stretch (gly residues) spans 92–101; that stretch reads SGGGAGGAGG.

The protein belongs to the UPF0229 family.

The polypeptide is UPF0229 protein lpp2857 (Legionella pneumophila (strain Paris)).